A 178-amino-acid chain; its full sequence is Large ribosomal subunit protein uL10 (178 aa).

The protein belongs to the universal ribosomal protein uL10 family. As to quaternary structure, part of the ribosomal stalk of the 50S ribosomal subunit. The N-terminus interacts with L11 and the large rRNA to form the base of the stalk. The C-terminus forms an elongated spine to which L12 dimers bind in a sequential fashion forming a multimeric L10(L12)X complex.

Its function is as follows. Forms part of the ribosomal stalk, playing a central role in the interaction of the ribosome with GTP-bound translation factors. The polypeptide is Large ribosomal subunit protein uL10 (Leuconostoc mesenteroides subsp. mesenteroides (strain ATCC 8293 / DSM 20343 / BCRC 11652 / CCM 1803 / JCM 6124 / NCDO 523 / NBRC 100496 / NCIMB 8023 / NCTC 12954 / NRRL B-1118 / 37Y)).